Reading from the N-terminus, the 690-residue chain is Proprotein convertase subtilisin/kexin type 9 (690 aa).

A signal peptide spans 1–28; it reads MGTVSSRRSWWPLPLLLLLLLGPAGARA. The propeptide occupies 29–150; the sequence is QEDEDGDYEE…IEEDSSVFAQ (122 aa). Y36 carries the sulfotyrosine modification. A Phosphoserine modification is found at S45. In terms of domain architecture, Inhibitor I9 spans 75 to 147; that stretch reads TYVVVLKEET…VDYIEEDSSV (73 aa). The 307-residue stretch at 153–459 folds into the Peptidase S8 domain; it reads PWNLERITPP…GWQLFCRTVW (307 aa). Active-site charge relay system residues include D184 and H224. Disulfide bonds link C221-C253 and C321-C356. Catalysis depends on S384, which acts as the Charge relay system. The interval 448–690 is C-terminal domain; that stretch reads GAGWQLFCRT…HLVQASQELQ (243 aa). Intrachain disulfides connect C455-C525, C475-C524, and C484-C507. N531 carries an N-linked (GlcNAc...) asparagine glycan. Cystine bridges form between C532/C599, C550/C598, C560/C586, C606/C677, C624/C676, and C633/C652. S686 bears the Phosphoserine mark.

This sequence belongs to the peptidase S8 family. Monomer. Can self-associate to form dimers and higher multimers which may have increased LDLR degrading activity. The precursor protein but not the mature protein may form multimers. Interacts with APOB, VLDLR, LRP8/APOER2 and BACE1. The full-length immature form (pro-PCSK9) interacts with SCNN1A, SCNN1B and SCNN1G. The pro-PCSK9 form (via C-terminal domain) interacts with LDLR. Interacts (via the C-terminal domain) with ANXA2 (via repeat Annexin 1); the interaction inhibits the degradation of LDLR. Ca(2+) is required as a cofactor. In terms of processing, cleavage by furin and PCSK5 generates a truncated inactive protein that is unable to induce LDLR degradation. Undergoes autocatalytic cleavage in the endoplasmic reticulum to release the propeptide from the N-terminus and the cleavage of the propeptide is strictly required for its maturation and activation. The cleaved propeptide however remains associated with the catalytic domain through non-covalent interactions, preventing potential substrates from accessing its active site. As a result, it is secreted from cells as a propeptide-containing, enzymatically inactive protein. Post-translationally, phosphorylation protects the propeptide against proteolysis.

It is found in the cytoplasm. The protein localises to the secreted. It localises to the endosome. The protein resides in the lysosome. Its subcellular location is the cell surface. It is found in the endoplasmic reticulum. The protein localises to the golgi apparatus. Its activity is regulated as follows. Its proteolytic activity is autoinhibited by the non-covalent binding of the propeptide to the catalytic domain. Inhibited by EGTA. In terms of biological role, crucial player in the regulation of plasma cholesterol homeostasis. Binds to low-density lipid receptor family members: low density lipoprotein receptor (LDLR), very low density lipoprotein receptor (VLDLR), apolipoprotein E receptor (LRP1/APOER) and apolipoprotein receptor 2 (LRP8/APOER2), and promotes their degradation in intracellular acidic compartments. Acts via a non-proteolytic mechanism to enhance the degradation of the hepatic LDLR through a clathrin LDLRAP1/ARH-mediated pathway. May prevent the recycling of LDLR from endosomes to the cell surface or direct it to lysosomes for degradation. Can induce ubiquitination of LDLR leading to its subsequent degradation. Inhibits intracellular degradation of APOB via the autophagosome/lysosome pathway in a LDLR-independent manner. Involved in the disposal of non-acetylated intermediates of BACE1 in the early secretory pathway. Inhibits epithelial Na(+) channel (ENaC)-mediated Na(+) absorption by reducing ENaC surface expression primarily by increasing its proteasomal degradation. Regulates neuronal apoptosis via modulation of LRP8/APOER2 levels and related anti-apoptotic signaling pathways. The sequence is that of Proprotein convertase subtilisin/kexin type 9 (PCSK9) from Gorilla gorilla gorilla (Western lowland gorilla).